The primary structure comprises 338 residues: Fructose-1,6-bisphosphatase 1 (338 aa).

An N-acetylthreonine modification is found at threonine 2. AMP contacts are provided by residues 18–22 (VMEEG) and 28–32 (TGEMT). Mg(2+) contacts are provided by aspartate 69 and glutamate 98. 113-114 (KY) is an AMP binding site. Mg(2+) is bound by residues aspartate 119, leucine 121, and aspartate 122. 122 to 125 (DGSS) contributes to the substrate binding site. Position 141 (arginine 141) interacts with AMP. An N6-succinyllysine modification is found at lysine 151. The residue at position 208 (serine 208) is a Phosphoserine; by PKA. Residues 213-216 (NEGY), 244-249 (RYVGSM), tyrosine 265, and 275-277 (KLR) each bind substrate. Tyrosine 216, tyrosine 245, and tyrosine 265 each carry phosphotyrosine. Glutamate 281 provides a ligand contact to Mg(2+).

This sequence belongs to the FBPase class 1 family. In terms of assembly, homotetramer. Mg(2+) is required as a cofactor.

It carries out the reaction beta-D-fructose 1,6-bisphosphate + H2O = beta-D-fructose 6-phosphate + phosphate. It functions in the pathway carbohydrate biosynthesis; gluconeogenesis. Subject to complex allosteric regulation. The enzyme can assume an active R-state, or an inactive T-state. Intermediate conformations may exist. AMP acts as an allosteric inhibitor. AMP binding affects the turnover of bound substrate and not the affinity for substrate. Fructose 2,6-bisphosphate acts as a competitive inhibitor. Fructose 2,6-bisphosphate and AMP have synergistic effects. Functionally, catalyzes the hydrolysis of fructose 1,6-bisphosphate to fructose 6-phosphate in the presence of divalent cations, acting as a rate-limiting enzyme in gluconeogenesis. Plays a role in regulating glucose sensing and insulin secretion of pancreatic beta-cells. Appears to modulate glycerol gluconeogenesis in liver. Important regulator of appetite and adiposity; increased expression of the protein in liver after nutrient excess increases circulating satiety hormones and reduces appetite-stimulating neuropeptides and thus seems to provide a feedback mechanism to limit weight gain. The sequence is that of Fructose-1,6-bisphosphatase 1 (FBP1) from Sus scrofa (Pig).